A 687-amino-acid chain; its full sequence is MLNKCSGSLTLLAVRRFCGPCRRLHYHKDNPNNINIAKNLLNNNIQARCSTNEASWKLAQKELDLKIREYEQKLKDVKLNDINKKSPLNIPDEVWTKFISEVNSYDKEKENHLSTGNHELRRTTPLKIGPLLLTRIGLLKSKNTASNNYSVDHIVSNLANDNTLLNRQVSTEEWNSHLRHLLNIPKCFLGVDIVEIVNFFNYLPQTVISKSSLEIWKAVEESGMKVMPDLLVLLMESTNASGDFRKTVQLYHLYQKSNAPPNGLVYQSYAIALSSLGKHKDLVALYSEQKSVSITPSKDFLNACIKAFSRTKEFTKAWEVFNFMKFTATSISPSAETYGLMIQICSSQYNPEKALDLYNEMKLRPIDPLTPTTFVINNLIHALATDVRFQTVAFSLLQDLSHYGLRPNHSTLYELIRLIAYSGKLDYMKDILDNFWVRQKLLPSILKVEQIFHFIFRALISAEVQTSSVTPDYTHFKEEVRKIIDSSKEPLIPFLKRSTLTENDLFLNAIYTFEYAKRKFPEALNSRLVTDFLNIFLERGSVQLFKEIYQLEFREMSTMEGSSMKVAKITLTYIYAIKLALLFNDFEFGYAAWQEYWHCKIHKLLPKEDASYEQKVVLLTLSLLSKNKHTSLARSLLLSHLDKGWTWNKHSLGFMRKMCSVMNDQATVYLIDSITNEIGINQRFTRK.

Residues 1-49 (MLNKCSGSLTLLAVRRFCGPCRRLHYHKDNPNNINIAKNLLNNNIQARC) constitute a mitochondrion transit peptide. 4 PPR repeats span residues 262 to 296 (NGLVYQSYAIALSSLGKHKDLVALYSEQKSVSITP), 297 to 331 (SKDFLNACIKAFSRTKEFTKAWEVFNFMKFTATSI), 334 to 368 (SAETYGLMIQICSSQYNPEKALDLYNEMKLRPIDP), and 372 to 407 (TTFVINNLIHALATDVRFQTVAFSLLQDLSHYGLRP).

It belongs to the CCM1 family. As to quaternary structure, binds to mitochondrial small subunit 15S rRNA.

It is found in the mitochondrion. In terms of biological role, regulates mitochondrial small subunit maturation by controlling 15S rRNA 5'-end processing. Localizes to the 5' precursor of the 15S rRNA in a position that is subsequently occupied by mS47 in the mature yeast mtSSU. Uses structure and sequence-specific RNA recognition, binding to a single-stranded region of the precursor and specifically recognizing bases -6 to -1. The exchange of Ccm1 for mS47 is coupled to the irreversible removal of precursor rRNA that is accompanied by conformational changes of the mitoribosomal proteins uS5m and mS26. These conformational changes signal completion of 5'-end rRNA processing through protection of the mature 5'-end of the 15S rRNA and stabilization of mS47. The removal of the 5' precursor together with the dissociation of Ccm1 may be catalyzed by the 5'-3' exoribonuclease Pet127. Involved in the specific removal of group I introns in mitochondrial encoded transcripts. This Schizosaccharomyces pombe (strain 972 / ATCC 24843) (Fission yeast) protein is Mitochondrial 15S rRNA processing factor ppr3.